The sequence spans 263 residues: Adaptin ear-binding coat-associated protein 2 (263 aa).

Disordered stretches follow at residues 166–194 (KKKE…PPGG) and 219–263 (APSS…WVQF). Position 181 is a phosphoserine (Ser-181). 2 short sequence motifs (WXXF motif) span residues 240–243 (WGDF) and 260–263 (WVQF). Positions 246–263 (STGSTSSQTQPGTGWVQF) are enriched in low complexity.

Belongs to the NECAP family. In terms of assembly, interacts with AP1G1 and AP2A1 components of the adapter protein complexes AP-1 and AP-2. Interacts with the GAE domain proteins GGA1, GGA2 and GGA3.

The protein localises to the cytoplasmic vesicle. The protein resides in the clathrin-coated vesicle membrane. It localises to the cell membrane. In terms of biological role, involved in endocytosis. The protein is Adaptin ear-binding coat-associated protein 2 (NECAP2) of Homo sapiens (Human).